The chain runs to 324 residues: MQFTIFTHLTMALSYAVPILIAVAFLTLVERKVLSYMQARKGPNIVGPFGLLQPVADGVKLFIKEPVRPTTSSPILFIATPILALLLAITIWIPLPLPFSLTDLNLGLLFLLSMSSLAVYSILWSGWASNSKYALIGALRAVAQTISYEVTLAIILLSVIMLSGNYTLNTLATTQEPLYLIFSTWPLAMMWYISTLAETNRAPFDLTEGESELVSGFNVEYAAGPFALFFLAEYANIMLMNTLTAILFLNPSSLNLPSELFPLILATKTLLLSSGFLWVRASYPRFRYDQLMHLLWKNFLPLTLALCLWHTSLPISYAGIPPHL.

The next 8 membrane-spanning stretches (helical) occupy residues L9–V29, I75–L95, L106–G126, V142–L162, P177–A197, L228–F248, E259–V279, and L300–I320.

The protein belongs to the complex I subunit 1 family.

It is found in the mitochondrion inner membrane. The catalysed reaction is a ubiquinone + NADH + 5 H(+)(in) = a ubiquinol + NAD(+) + 4 H(+)(out). Functionally, core subunit of the mitochondrial membrane respiratory chain NADH dehydrogenase (Complex I) that is believed to belong to the minimal assembly required for catalysis. Complex I functions in the transfer of electrons from NADH to the respiratory chain. The immediate electron acceptor for the enzyme is believed to be ubiquinone. In Struthio camelus (Common ostrich), this protein is NADH-ubiquinone oxidoreductase chain 1 (MT-ND1).